Here is a 506-residue protein sequence, read N- to C-terminus: Cytochrome P450 52B1 (506 aa).

A heme-binding site is contributed by C451.

The protein belongs to the cytochrome P450 family. The cofactor is heme.

Together with an NADPH cytochrome P450 the enzyme system catalyzes the terminal hydroxylation as the first step in the assimilation of alkanes and fatty acids. The chain is Cytochrome P450 52B1 (CYP52B1) from Candida tropicalis (Yeast).